The following is a 136-amino-acid chain: Protein scalloped (136 aa).

The protein localises to the nucleus. Functionally, probable transcription factor that function in the regulation of cell-specific gene expression during drosophila development, particularly in the differentiation of the nervous system. In Junonia coenia (Peacock butterfly), this protein is Protein scalloped (SD).